The sequence spans 89 residues: Small ribosomal subunit protein uS15 (89 aa).

The segment at 1–25 is disordered; it reads MSLDTTEKQQLINTHQTHGTDTGSA. Positions 8–25 are enriched in polar residues; the sequence is KQQLINTHQTHGTDTGSA.

This sequence belongs to the universal ribosomal protein uS15 family. As to quaternary structure, part of the 30S ribosomal subunit. Forms a bridge to the 50S subunit in the 70S ribosome, contacting the 23S rRNA.

Functionally, one of the primary rRNA binding proteins, it binds directly to 16S rRNA where it helps nucleate assembly of the platform of the 30S subunit by binding and bridging several RNA helices of the 16S rRNA. Its function is as follows. Forms an intersubunit bridge (bridge B4) with the 23S rRNA of the 50S subunit in the ribosome. This chain is Small ribosomal subunit protein uS15, found in Synechococcus sp. (strain CC9605).